We begin with the raw amino-acid sequence, 224 residues long: ATP synthase subunit a (224 aa).

6 consecutive transmembrane segments (helical) span residues 17–37, 72–92, 99–119, 125–145, 170–190, and 195–215; these read LSLN…IYWL, IFIS…FPYI, LTLT…YGWI, MFAH…MVCI, LLLT…VTFL, and IALL…FAVL.

This sequence belongs to the ATPase A chain family. F-type ATPases have 2 components, CF(1) - the catalytic core - and CF(0) - the membrane proton channel. CF(1) has five subunits: alpha(3), beta(3), gamma(1), delta(1), epsilon(1). CF(0) has three main subunits: a, b and c.

Its subcellular location is the mitochondrion inner membrane. Mitochondrial membrane ATP synthase (F(1)F(0) ATP synthase or Complex V) produces ATP from ADP in the presence of a proton gradient across the membrane which is generated by electron transport complexes of the respiratory chain. F-type ATPases consist of two structural domains, F(1) - containing the extramembraneous catalytic core and F(0) - containing the membrane proton channel, linked together by a central stalk and a peripheral stalk. During catalysis, ATP synthesis in the catalytic domain of F(1) is coupled via a rotary mechanism of the central stalk subunits to proton translocation. Key component of the proton channel; it may play a direct role in the translocation of protons across the membrane. This Drosophila simulans (Fruit fly) protein is ATP synthase subunit a (mt:ATPase6).